Reading from the N-terminus, the 459-residue chain is Exodeoxyribonuclease 7 large subunit (459 aa).

It belongs to the XseA family. In terms of assembly, heterooligomer composed of large and small subunits.

It is found in the cytoplasm. The enzyme catalyses Exonucleolytic cleavage in either 5'- to 3'- or 3'- to 5'-direction to yield nucleoside 5'-phosphates.. In terms of biological role, bidirectionally degrades single-stranded DNA into large acid-insoluble oligonucleotides, which are then degraded further into small acid-soluble oligonucleotides. This is Exodeoxyribonuclease 7 large subunit from Pseudomonas entomophila (strain L48).